We begin with the raw amino-acid sequence, 83 residues long: Cytotoxin homolog 5 (83 aa).

An N-terminal signal peptide occupies residues 1-21; sequence MKTLLLTMVVVTIVCLDLGYT. 4 disulfide bridges follow: Cys24/Cys43, Cys36/Cys61, Cys65/Cys76, and Cys77/Cys82.

Belongs to the three-finger toxin family. Short-chain subfamily. Orphan group XV sub-subfamily. In terms of tissue distribution, expressed by the venom gland.

Its subcellular location is the secreted. It is found in the target cell membrane. Functionally, has low cytotoxic activity. The protein is Cytotoxin homolog 5 of Naja atra (Chinese cobra).